The sequence spans 234 residues: Probable transcriptional regulatory protein PSPTO_3162 (234 aa).

Belongs to the TACO1 family.

The protein resides in the cytoplasm. The chain is Probable transcriptional regulatory protein PSPTO_3162 from Pseudomonas syringae pv. tomato (strain ATCC BAA-871 / DC3000).